A 275-amino-acid polypeptide reads, in one-letter code: MSTLDEVLALLRTIAPSGDETELTADTLLFSSGLLDSLALEELHVAIEERWAPIPPMELARANFDTPAAIAATVARITHEETPVSVVRNLLSDSGRLTADLAPDAMGAGAQLLFDTWHAGGTTLSCGNGGSASTASHFAADLAKLTIVPGQRRMRTLCLNDNASAFSAWTNDEGFPVVYREQAEPWLEPTATLVAFSVHGGSRGGEVSANLPAVARLAKERGAAVVAVTGFDGGALGDLADVHINIPHATEPVATPLIESLHVLVHHALCVAHAP.

In terms of domain architecture, Carrier spans 1-78; it reads MSTLDEVLAL…AIAATVARIT (78 aa). The residue at position 37 (Ser37) is an O-(pantetheine 4'-phosphoryl)serine. The SIS domain occupies 113-275; sequence LFDTWHAGGT…HHALCVAHAP (163 aa).

It functions in the pathway antibiotic biosynthesis; lincomycin biosynthesis. The polypeptide is Lincomycin biosynthesis protein LmbN (lmbN) (Streptomyces lincolnensis).